The sequence spans 521 residues: Ribonuclease Y (521 aa).

Residues 10–30 (LIITAGVSIALAIVAFFLGYL) form a helical membrane-spanning segment. Residues 210–270 (TVSVVTLPND…IRREIAKLTL (61 aa)) form the KH domain. Residues 336-430 (VLAHSIEVAN…IQAADSVSAA (95 aa)) form the HD domain.

It belongs to the RNase Y family.

Its subcellular location is the cell membrane. Functionally, endoribonuclease that initiates mRNA decay. In Caldicellulosiruptor saccharolyticus (strain ATCC 43494 / DSM 8903 / Tp8T 6331), this protein is Ribonuclease Y.